The primary structure comprises 324 residues: Viral cathepsin (324 aa).

Residues 1 to 18 (MNKIVLYLLIYVGTFSAA) form the signal peptide. The propeptide at 19–113 (YDLLKAPSYF…VVLNRPPDKG (95 aa)) is activation peptide. Disulfide bonds link cysteine 134–cysteine 175, cysteine 168–cysteine 208, and cysteine 263–cysteine 311. The active site involves cysteine 137. Asparagine 159 is a glycosylation site (N-linked (GlcNAc...) asparagine; by host). Catalysis depends on residues histidine 270 and asparagine 290.

This sequence belongs to the peptidase C1 family. Synthesized as an inactive proenzyme and activated by proteolytic removal of the inhibitory propeptide.

It carries out the reaction Endopeptidase of broad specificity, hydrolyzing substrates of both cathepsin L and cathepsin B.. In terms of biological role, cysteine protease that plays an essential role in host liquefaction to facilitate horizontal transmission of the virus. May participate in the degradation of foreign protein expressed by the baculovirus system. The polypeptide is Viral cathepsin (Vcath) (Choristoneura fumiferana defective polyhedrosis virus (Cfdef)).